The sequence spans 302 residues: Glutaminase (302 aa).

Positions 61, 111, 155, 162, 186, 238, and 256 each coordinate substrate.

It belongs to the glutaminase family. In terms of assembly, homotetramer.

It carries out the reaction L-glutamine + H2O = L-glutamate + NH4(+). The chain is Glutaminase from Pseudomonas paraeruginosa (strain DSM 24068 / PA7) (Pseudomonas aeruginosa (strain PA7)).